Consider the following 249-residue polypeptide: MSGHSKWANIKHRKAAADAKKGKLFSQLSKEIIIAAKHGGGNPETNPRLRAAIERAREANMPKENIEKAIMRGTGEIPGVAYEEVTYEGYGPGGVAIMVEVVTDNKNRTAAEIRRIFTKHGGNLGEAGCVAWIFEEKGSIIIEKESVKDEDQLISDALEAGAEDVQISDDTVEVITSPESFSEVRDILKEKGYKITQAEVTKVPKNLVPVDGPDAEKVLKLMEELEDHDDVQKTYANFDIPDEILQSLS.

The protein belongs to the TACO1 family.

The protein resides in the cytoplasm. The protein is Probable transcriptional regulatory protein Dtur_1615 of Dictyoglomus turgidum (strain DSM 6724 / Z-1310).